The primary structure comprises 87 residues: Long neurotoxin homolog (87 aa).

The first 21 residues, 1–21 (MKTLLLTLVVVTIVCLDLGYT), serve as a signal peptide directing secretion. 5 cysteine pairs are disulfide-bonded: Cys-24-Cys-47, Cys-27-Cys-32, Cys-40-Cys-64, Cys-68-Cys-80, and Cys-81-Cys-86.

In terms of tissue distribution, expressed by the venom gland.

The protein localises to the secreted. Functionally, inhibits carbachol-induced muscle contraction in a reversible manner. The polypeptide is Long neurotoxin homolog (Bungarus multicinctus (Many-banded krait)).